We begin with the raw amino-acid sequence, 159 residues long: Small ribosomal subunit protein uS9 (159 aa).

The protein belongs to the universal ribosomal protein uS9 family.

This Rickettsia peacockii (strain Rustic) protein is Small ribosomal subunit protein uS9.